Consider the following 316-residue polypeptide: Acetyl-coenzyme A carboxylase carboxyl transferase subunit alpha (316 aa).

The CoA carboxyltransferase C-terminal domain occupies 39 to 293 (RLQDKSKALT…RGELLTQLKM (255 aa)).

Belongs to the AccA family. In terms of assembly, acetyl-CoA carboxylase is a heterohexamer composed of biotin carboxyl carrier protein (AccB), biotin carboxylase (AccC) and two subunits each of ACCase subunit alpha (AccA) and ACCase subunit beta (AccD).

It localises to the cytoplasm. The catalysed reaction is N(6)-carboxybiotinyl-L-lysyl-[protein] + acetyl-CoA = N(6)-biotinyl-L-lysyl-[protein] + malonyl-CoA. It functions in the pathway lipid metabolism; malonyl-CoA biosynthesis; malonyl-CoA from acetyl-CoA: step 1/1. Its function is as follows. Component of the acetyl coenzyme A carboxylase (ACC) complex. First, biotin carboxylase catalyzes the carboxylation of biotin on its carrier protein (BCCP) and then the CO(2) group is transferred by the carboxyltransferase to acetyl-CoA to form malonyl-CoA. This Pseudomonas aeruginosa (strain LESB58) protein is Acetyl-coenzyme A carboxylase carboxyl transferase subunit alpha.